The sequence spans 509 residues: Scavenger receptor class B member 1 (509 aa).

Residues 1–11 lie on the Cytoplasmic side of the membrane; it reads MGGSARARWVA. A helical transmembrane segment spans residues 12 to 32; the sequence is VGLGVVGLLCAVLGVVMILVM. At 33–440 the chain is on the extracellular side; that stretch reads PSLIKQQVLK…YTQLVLMPQV (408 aa). N-linked (GlcNAc...) asparagine glycosylation is found at N102, N108, N173, N212, N227, N255, N310, N330, and N383. Cysteines 251 and 384 form a disulfide. The chain crosses the membrane as a helical span at residues 441–461; sequence LQYVQYVLLGLGGLLLLVPVI. Topologically, residues 462–509 are cytoplasmic; sequence YQLRSQEKCFLFWSGSKKGSQDKEAIQAYSESLMSPAAKGTVLQEAKL.

Belongs to the CD36 family. N-glycosylated. In terms of processing, the six cysteines of the extracellular domain are all involved in intramolecular disulfide bonds.

It is found in the cell membrane. The protein localises to the membrane. Its subcellular location is the caveola. Its function is as follows. Receptor for different ligands such as phospholipids, cholesterol ester, lipoproteins, phosphatidylserine and apoptotic cells. Receptor for HDL, mediating selective uptake of cholesteryl ether and HDL-dependent cholesterol efflux. Also facilitates the flux of free and esterified cholesterol between the cell surface and apoB-containing lipoproteins and modified lipoproteins, although less efficiently than HDL. May be involved in the phagocytosis of apoptotic cells, via its phosphatidylserine binding activity. The chain is Scavenger receptor class B member 1 (SCARB1) from Cricetulus griseus (Chinese hamster).